Reading from the N-terminus, the 153-residue chain is FAD synthase (153 aa).

Residues 9-10 (TF), 14-17 (HPGH), and Asp92 contribute to the ATP site.

Belongs to the archaeal FAD synthase family. In terms of assembly, homodimer. It depends on a divalent metal cation as a cofactor.

The catalysed reaction is FMN + ATP + H(+) = FAD + diphosphate. It participates in cofactor biosynthesis; FAD biosynthesis; FAD from FMN: step 1/1. Catalyzes the transfer of the AMP portion of ATP to flavin mononucleotide (FMN) to produce flavin adenine dinucleotide (FAD) coenzyme. This Halorubrum lacusprofundi (strain ATCC 49239 / DSM 5036 / JCM 8891 / ACAM 34) protein is FAD synthase.